The chain runs to 362 residues: RNA-binding protein 4 (362 aa).

RRM domains follow at residues 2 to 72 (VKLF…ASKN) and 78 to 148 (TKLH…LSTS). Lys-79 is covalently cross-linked (Glycyl lysine isopeptide (Lys-Gly) (interchain with G-Cter in SUMO2)). Ser-86 is modified (phosphoserine). Residue Lys-92 forms a Glycyl lysine isopeptide (Lys-Gly) (interchain with G-Cter in SUMO2) linkage. The segment at 160-177 (SGCYRCGKEGHWSKECPV) adopts a CCHC-type zinc-finger fold. The segment at 196 to 362 (AVRTPYTMGY…YADRARYSAF (167 aa)) is interaction with TNPO3. The segment at 306-336 (RSPLRRATGPVPTVGEGYGYGHESELSQGSS) is disordered. Phosphoserine is present on Ser-307.

Interacts with TNPO3; the interaction mediates nuclear import of the protein and is disrupted by nuclear Ran bound to GTP. Interacts with EIF4G1 and WT1. Interacts with EIF4A1; the interaction is modulated under stress-induced conditions. Interacts with AGO1. Interacts with AGO2; the interaction occurs under both cell proliferation and differentiation conditions and in an RNA- and phosphorylation-independent manner. Interacts with DDX5; the interaction occurs in an RNA-independent manner. Interacts with RBPMS; the interaction allows cooperative assembly of RNA-bound stable cell-specific alternative splicing regulatory complexes. Phosphorylated. Phosphorylated in vitro on Ser-307 by SRPK1. Phosphorylation on Ser-307 is induced upon cell stress signaling, which alters its subcellular localization and may modulate its activity on IRES-mediated mRNA translation. Phosphorylation on Ser-307 is induced upon cell muscle differentiation.

It is found in the nucleus. It localises to the nucleolus. Its subcellular location is the nucleus speckle. The protein resides in the cytoplasm. The protein localises to the cytoplasmic granule. Functionally, RNA-binding factor involved in multiple aspects of cellular processes like alternative splicing of pre-mRNA and translation regulation. Modulates alternative 5'-splice site and exon selection. Acts as a muscle cell differentiation-promoting factor. Activates exon skipping of the PTB pre-mRNA during muscle cell differentiation. Antagonizes the activity of the splicing factor PTBP1 to modulate muscle cell-specific exon selection of alpha tropomyosin. Binds to intronic pyrimidine-rich sequence of the TPM1 and MAPT pre-mRNAs. Required for the translational activation of PER1 mRNA in response to circadian clock. Binds directly to the 3'-UTR of the PER1 mRNA. Exerts a suppressive activity on Cap-dependent translation via binding to CU-rich responsive elements within the 3'UTR of mRNAs, a process increased under stress conditions or during myocytes differentiation. Recruits EIF4A1 to stimulate IRES-dependent translation initiation in respons to cellular stress. Associates to internal ribosome entry segment (IRES) in target mRNA species under stress conditions. Plays a role for miRNA-guided RNA cleavage and translation suppression by promoting association of AGO2-containing miRNPs with their cognate target mRNAs. Associates with miRNAs during muscle cell differentiation. Binds preferentially to 5'-CGCGCG[GCA]-3' motif in vitro. The sequence is that of RNA-binding protein 4 (RBM4) from Bos taurus (Bovine).